A 355-amino-acid chain; its full sequence is NADH-quinone oxidoreductase subunit H (355 aa).

8 consecutive transmembrane segments (helical) span residues Ile-25 to Trp-45, Trp-91 to Ile-111, Leu-126 to Ala-146, Met-170 to Val-190, Phe-205 to Ile-225, Met-253 to Ala-273, Phe-290 to Trp-310, and Val-330 to Leu-350.

This sequence belongs to the complex I subunit 1 family. As to quaternary structure, NDH-1 is composed of 14 different subunits. Subunits NuoA, H, J, K, L, M, N constitute the membrane sector of the complex.

It localises to the cell inner membrane. The catalysed reaction is a quinone + NADH + 5 H(+)(in) = a quinol + NAD(+) + 4 H(+)(out). Functionally, NDH-1 shuttles electrons from NADH, via FMN and iron-sulfur (Fe-S) centers, to quinones in the respiratory chain. The immediate electron acceptor for the enzyme in this species is believed to be ubiquinone. Couples the redox reaction to proton translocation (for every two electrons transferred, four hydrogen ions are translocated across the cytoplasmic membrane), and thus conserves the redox energy in a proton gradient. This subunit may bind ubiquinone. The protein is NADH-quinone oxidoreductase subunit H of Burkholderia ambifaria (strain MC40-6).